The sequence spans 611 residues: Threonine--tRNA ligase (611 aa).

A catalytic region spans residues D209 to P502. Zn(2+) contacts are provided by C302, H353, and H479.

This sequence belongs to the class-II aminoacyl-tRNA synthetase family. Homodimer. Requires Zn(2+) as cofactor.

It is found in the cytoplasm. It carries out the reaction tRNA(Thr) + L-threonine + ATP = L-threonyl-tRNA(Thr) + AMP + diphosphate + H(+). Its function is as follows. Catalyzes the attachment of threonine to tRNA(Thr) in a two-step reaction: L-threonine is first activated by ATP to form Thr-AMP and then transferred to the acceptor end of tRNA(Thr). Also edits incorrectly charged L-seryl-tRNA(Thr). In Synechococcus sp. (strain CC9902), this protein is Threonine--tRNA ligase.